A 194-amino-acid chain; its full sequence is Type II restriction enzyme OkrAI (194 aa).

The Mg(2+) site is built by Glu71, Asp86, and Trp100. The active-site Proton acceptor is Glu101.

As to quaternary structure, homodimer. Mg(2+) serves as cofactor.

It carries out the reaction Endonucleolytic cleavage of DNA to give specific double-stranded fragments with terminal 5'-phosphates.. Functionally, a P subtype restriction enzyme that recognizes the double-stranded sequence 5'-GGATCC-3' and cleaves after G-1. The protein is Type II restriction enzyme OkrAI of Oceanobacter kriegii (Oceanospirillum kriegii).